A 458-amino-acid chain; its full sequence is tRNA modification GTPase MnmE (458 aa).

3 residues coordinate (6S)-5-formyl-5,6,7,8-tetrahydrofolate: R22, E86, and R125. In terms of domain architecture, TrmE-type G spans G221–F379. Residue N231 coordinates K(+). Residues N231–S236, T250–T256, and D275–G278 contribute to the GTP site. Mg(2+) is bound at residue S235. 3 residues coordinate K(+): T250, I252, and T255. T256 provides a ligand contact to Mg(2+). Residue K458 participates in (6S)-5-formyl-5,6,7,8-tetrahydrofolate binding.

This sequence belongs to the TRAFAC class TrmE-Era-EngA-EngB-Septin-like GTPase superfamily. TrmE GTPase family. As to quaternary structure, homodimer. Heterotetramer of two MnmE and two MnmG subunits. K(+) is required as a cofactor.

The protein resides in the cytoplasm. In terms of biological role, exhibits a very high intrinsic GTPase hydrolysis rate. Involved in the addition of a carboxymethylaminomethyl (cmnm) group at the wobble position (U34) of certain tRNAs, forming tRNA-cmnm(5)s(2)U34. This Lachnoclostridium phytofermentans (strain ATCC 700394 / DSM 18823 / ISDg) (Clostridium phytofermentans) protein is tRNA modification GTPase MnmE.